A 148-amino-acid chain; its full sequence is Deoxyuridine 5'-triphosphate nucleotidohydrolase (148 aa).

Substrate contacts are provided by residues arginine 68 to glycine 70, asparagine 81, threonine 85 to aspartate 87, and lysine 95.

The protein belongs to the dUTPase family. It depends on Mg(2+) as a cofactor.

It catalyses the reaction dUTP + H2O = dUMP + diphosphate + H(+). The protein operates within pyrimidine metabolism; dUMP biosynthesis; dUMP from dCTP (dUTP route): step 2/2. Its function is as follows. This enzyme is involved in nucleotide metabolism: it produces dUMP, the immediate precursor of thymidine nucleotides and it decreases the intracellular concentration of dUTP so that uracil cannot be incorporated into DNA. The sequence is that of Deoxyuridine 5'-triphosphate nucleotidohydrolase from Caldanaerobacter subterraneus subsp. tengcongensis (strain DSM 15242 / JCM 11007 / NBRC 100824 / MB4) (Thermoanaerobacter tengcongensis).